Reading from the N-terminus, the 98-residue chain is Nuclear protein 2 (98 aa).

Residues 1 to 11 (MEPAAPTVQPR) are compositionally biased toward low complexity. 2 disordered regions span residues 1–24 (MEPA…PPVG) and 78–98 (LNSQ…TRLT). The segment covering 81-98 (QRKRRQRQLQPRPRTRLT) has biased composition (basic residues).

Belongs to the NUPR family.

It localises to the nucleus. Its function is as follows. Acts as a transcriptional repressor by inhibiting gene expression at the NUPR1 promoter in a p53/TP53-dependent manner in cancer cells. Involved in the G1 cell cycle arrest, and in a decrease in cell viability and cell proliferation. Plays a role as a negative regulator of the protumoral factor NUPR1. The polypeptide is Nuclear protein 2 (Bos taurus (Bovine)).